The chain runs to 286 residues: Elongation factor Ts (286 aa).

Residues 82-85 (TDFV) form an involved in Mg(2+) ion dislocation from EF-Tu region. The segment at 212-286 (VAAQTGQKVE…SPSKKGKKKK (75 aa)) is disordered. Over residues 215–227 (QTGQKVEQPQAAQ) the composition is skewed to polar residues. Residues 253–269 (ETDSPAAETTTEPPKTT) show a composition bias toward low complexity.

Belongs to the EF-Ts family.

It is found in the cytoplasm. Functionally, associates with the EF-Tu.GDP complex and induces the exchange of GDP to GTP. It remains bound to the aminoacyl-tRNA.EF-Tu.GTP complex up to the GTP hydrolysis stage on the ribosome. The chain is Elongation factor Ts from Gloeothece citriformis (strain PCC 7424) (Cyanothece sp. (strain PCC 7424)).